Reading from the N-terminus, the 355-residue chain is Probable F-box protein At5g36000 (355 aa).

A compositionally biased stretch (basic and acidic residues) spans 1–14 (MNTRSGDAEGDIRG). The interval 1–44 (MNTRSGDAEGDIRGKMIAPVRDGNGGQKRKLVQSNDIQRDEDGG) is disordered. In terms of domain architecture, F-box; degenerate spans 78-124 (QSRFSWYEQDIWTYITRFLDGKSLVKLGATNKWFYKIAMEDTVWRFA).

This Arabidopsis thaliana (Mouse-ear cress) protein is Probable F-box protein At5g36000.